We begin with the raw amino-acid sequence, 213 residues long: 5-deoxy-D-ribulose 1-phosphate aldolase (213 aa).

Substrate is bound by residues 28–29 (GN), 45–46 (SG), and 74–76 (SSE). Catalysis depends on E76, which acts as the Proton donor/acceptor. Mn(2+)-binding residues include E76, H95, H97, and H157.

The protein belongs to the aldolase class II family. As to quaternary structure, forms homooligomers, possibly homotetramers. It depends on Mn(2+) as a cofactor.

The catalysed reaction is 5-deoxy-D-ribulose 1-phosphate = dihydroxyacetone phosphate + acetaldehyde. It participates in carbohydrate degradation. In terms of biological role, catalyzes the cleavage of 5-deoxy-D-ribulose 1-phosphate to yield dihydroxyacetone phosphate (DHAP) and acetaldehyde, as part of a 5-deoxyribose salvage pathway that recycles this toxic radical SAM enzyme by-product to mainstream metabolites. Is also able to catalyze the reverse reaction, using several aldehydes as substrate, with acetaldehyde being the preferred substrate. The sequence is that of 5-deoxy-D-ribulose 1-phosphate aldolase from Bacillus thuringiensis serovar kurstaki (strain ATCC 35866 / NRRL B-4488 / HD73).